Reading from the N-terminus, the 1003-residue chain is Anoctamin-2 (1003 aa).

The tract at residues 1–68 is disordered; that stretch reads MATPGPRDIP…PCGGESTRSS (68 aa). The Cytoplasmic segment spans residues 1-365; that stretch reads MATPGPRDIP…FGEKIGLYFA (365 aa). A compositionally biased stretch (low complexity) spans 10–21; the sequence is PLLPGSPRRLSP. The helical transmembrane segment at 366-386 threads the bilayer; sequence WLGLYTSFLIPSSVIGVIVFL. At 387-434 the chain is on the extracellular side; that stretch reads YGCATIEEDIPSREMCDQQNAFTMCPLCDKSCDYWNLSSACGTAQASH. A glycan (N-linked (GlcNAc...) asparagine) is linked at N422. The helical transmembrane segment at 435 to 455 threads the bilayer; that stretch reads LFDNPATVFFSIFMALWATMF. The Cytoplasmic segment spans residues 456–538; it reads LENWKRLQMR…KDRFPGYLMN (83 aa). Residues 539 to 559 form a helical membrane-spanning segment; sequence FASILFMIALTFSIVFGVIVY. Over 560–582 the chain is Extracellular; that stretch reads RITTAAALSLNKATRSNVRVTVT. The chain crosses the membrane as a helical span at residues 583–603; the sequence is ATAVIINLVVILILDEIYGAV. At 604-623 the chain is on the cytoplasmic side; sequence AKWLTKIEVPKTEQTFEERL. The helical transmembrane segment at 624–644 threads the bilayer; that stretch reads ILKAFLLKFVNAYSPIFYVAF. Over 645–748 the chain is Extracellular; it reads FKGRFVGRPG…YTGLTPEYME (104 aa). The helical transmembrane segment at 749–769 threads the bilayer; the sequence is MIIQFGFVTLFVASFPLAPVF. Topologically, residues 770 to 801 are cytoplasmic; the sequence is ALLNNVIEVRLDAKKFVTELRRPDAVRTKDIG. Residues 802 to 822 form a helical membrane-spanning segment; that stretch reads IWFDILSGIGKFSVISNAFVI. Residues 823-907 lie on the Extracellular side of the membrane; the sequence is AITSDFIPRL…QYWFILSARL (85 aa). 3 N-linked (GlcNAc...) asparagine glycosylation sites follow: N841, N849, and N856. The chain crosses the membrane as a helical span at residues 908–928; the sequence is AFVIIFQNLVMFLSVLVDWMI. The Cytoplasmic segment spans residues 929-1003; sequence PDIPTDISDQ…MSSGSQHTNV (75 aa). A disordered region spans residues 961-1003; the sequence is MDEPALRSPGGGDRSRSRAASSAPSGQSQLGSMMSSGSQHTNV. A compositionally biased stretch (low complexity) spans 978–1003; that stretch reads RAASSAPSGQSQLGSMMSSGSQHTNV. Positions 1001–1003 match the DLG4 binding (PDZ) motif; the sequence is TNV.

Belongs to the anoctamin family. As to quaternary structure, homodimer. Component of a presynaptic protein complex recruited to specialized plasma membrane domains of photoreceptors. Interacts with DLG4 by its C-terminal region. Retina, especially in the photoreceptor synaptic terminals.

It is found in the cell membrane. The catalysed reaction is chloride(in) = chloride(out). Channel activity is repressed by chloride inhibitors; strongly by niflumic acid (NFA), partially by flufenamic acid (FFA), and only slightly by meclofenamic acid (MFA), 5-Nitro-2-(3-phenylpropylamino)benzoic acid (NPPB), 4-acetamido-4'-isothiocyanato-stilben-2,2'-disulfonate (SITS), and 4,4'-diisothiocyanatostilbene-2,2'-disulfonic acid (DIDS). In terms of biological role, calcium-activated chloride channel (CaCC) which may play a role in olfactory signal transduction. Odorant molecules bind to odor-sensing receptors (OSRs), leading to an increase in calcium entry that activates CaCC current which amplifies the depolarization of the OSR cells, ANO2 seems to be the underlying chloride channel involved in this process. May mediate light perception amplification in retina. This is Anoctamin-2 (ANO2) from Homo sapiens (Human).